We begin with the raw amino-acid sequence, 284 residues long: Protein Ku (284 aa).

The 180-residue stretch at 10 to 189 (TIGLVTVPVK…ELRSTEGIVP (180 aa)) folds into the Ku domain.

Homodimer. Interacts with host LigD.

Functionally, required for replication of viruses with short cos ends (4 bases). Stimulates dsDNA end-joining by host LigD. Binds dsDNA with either blunt, 5'- or 3-overhangs, protecting it from host exonuclease degradation. The sequence is that of Protein Ku (87) from Mycobacterium phage Corndog (Mycobacteriophage Corndog).